Reading from the N-terminus, the 223-residue chain is Ribose-5-phosphate isomerase A (223 aa).

Substrate is bound by residues 32–35 (TGST), 85–88 (DGAD), and 98–101 (KGGG). Glu107 functions as the Proton acceptor in the catalytic mechanism. Lys125 is a substrate binding site.

The protein belongs to the ribose 5-phosphate isomerase family. Homodimer.

It catalyses the reaction aldehydo-D-ribose 5-phosphate = D-ribulose 5-phosphate. The protein operates within carbohydrate degradation; pentose phosphate pathway; D-ribose 5-phosphate from D-ribulose 5-phosphate (non-oxidative stage): step 1/1. Its function is as follows. Catalyzes the reversible conversion of ribose-5-phosphate to ribulose 5-phosphate. The chain is Ribose-5-phosphate isomerase A from Stutzerimonas stutzeri (strain A1501) (Pseudomonas stutzeri).